A 428-amino-acid polypeptide reads, in one-letter code: Histone deacetylase 3 (428 aa).

The tract at residues 3 to 316 is histone deacetylase; that stretch reads KTVAYFYDPD…WTYETSLLVD (314 aa). 3 residues coordinate 1D-myo-inositol 1,4,5,6-tetrakisphosphate: His17, Gly21, and Lys25. The active site involves His135. Asp170, His172, and Asp259 together coordinate Zn(2+). Arg265 provides a ligand contact to 1D-myo-inositol 1,4,5,6-tetrakisphosphate. 2 stretches are compositionally biased toward basic and acidic residues: residues 386 to 405 and 415 to 428; these read SYER…DNYS and DGDH…DVEI. Positions 386 to 428 are disordered; it reads SYERTDEPDPEERGSEDNYSRPEASNEFYDGDHDNDKESDVEI.

The protein belongs to the histone deacetylase family. HD type 1 subfamily.

It localises to the nucleus. It is found in the chromosome. Its subcellular location is the cytoplasm. The protein resides in the cytosol. The catalysed reaction is N(6)-acetyl-L-lysyl-[histone] + H2O = L-lysyl-[histone] + acetate. It carries out the reaction N(6)-acetyl-L-lysyl-[protein] + H2O = L-lysyl-[protein] + acetate. It catalyses the reaction N(6)-(2E)-butenoyl-L-lysyl-[protein] + H2O = (2E)-2-butenoate + L-lysyl-[protein]. The enzyme catalyses N(6)-(2-hydroxyisobutanoyl)-L-lysyl-[protein] + H2O = 2-hydroxy-2-methylpropanoate + L-lysyl-[protein]. The catalysed reaction is N(6)-[(S)-lactoyl]-L-lysyl-[protein] + H2O = (S)-lactate + L-lysyl-[protein]. With respect to regulation, inositol tetraphosphate (1D-myo-inositol 1,4,5,6-tetrakisphosphate) promotes the histone deacetylase activity by acting as an intermolecular glue between hdac3 and N-Cor repressor complex components. In terms of biological role, histone deacetylase that catalyzes the deacetylation of lysine residues on the N-terminal part of the core histones (H2A, H2B, H3 and H4), and some other non-histone substrates. Histone deacetylation gives a tag for epigenetic repression and plays an important role in transcriptional regulation, cell cycle progression and developmental events. Histone deacetylases act via the formation of large multiprotein complexes, such as N-Cor repressor complex, which activate the histone deacetylase activity. Participates in the BCL6 transcriptional repressor activity by deacetylating the H3 'Lys-27' (H3K27) on enhancer elements, antagonizing EP300 acetyltransferase activity and repressing proximal gene expression. Also functions as a deacetylase for non-histone targets. In addition to protein deacetylase activity, also acts as a protein-lysine deacylase by recognizing other acyl groups: catalyzes removal of (2E)-butenoyl (crotonyl), lactoyl (lactyl) and 2-hydroxyisobutanoyl (2-hydroxyisobutyryl) acyl groups from lysine residues, leading to protein decrotonylation, delactylation and de-2-hydroxyisobutyrylation, respectively. In Xenopus tropicalis (Western clawed frog), this protein is Histone deacetylase 3 (hdac3).